A 212-amino-acid polypeptide reads, in one-letter code: Protein irg-1 (212 aa).

Expressed in the intestine.

Its function is as follows. Plays a role in innate immunity by conferring resistance to virulent strains of the Gram-negative bacterium P.aeruginosa via the zip-2 pathway. Can act independently of several immunity-related pathways including pmk-1 p38MAPK, dbl-1 TGF-beta, kgb-1 JNK and bar-1/beta-catenin pathways. The protein is Protein irg-1 of Caenorhabditis elegans.